Here is a 277-residue protein sequence, read N- to C-terminus: MDQAIAGLAAGTASTLIMHPLDLAKIQMQASMNQDSKSLFQVFKSNIGSNGSIRSLYHGLSINVLGSAASWGAYFCIYDFSKRVVMSMTPFNNGEISVLQTLCSSGFAGCIVAALTNPIWVVKSRILSKRVNYTNPFFGFYDLIKNEGLRGCYAGFAPSLLGVSQGALQFMAYEKLKLWKQRRPTSLDYIFMSAASKVFAAVNMYPLLVIRTRLQVMRSPHRSIMNLVLQTWRLQGILGFYKGFLPHLLRVVPQTCITFLVYEQVGMHFKTQSSKSQ.

Solcar repeat units follow at residues 1–84 (MDQA…SKRV), 96–179 (ISVL…LKLW), and 184–268 (PTSL…VGMH). Transmembrane regions (helical) follow at residues 3–24 (QAIA…LDLA), 60–80 (LSIN…IYDF), 102–122 (LCSS…IWVV), 152–172 (CYAG…QFMA), 190–210 (IFMS…LLVI), and 240–261 (FYKG…TFLV).

The protein belongs to the mitochondrial carrier (TC 2.A.29) family.

It is found in the mitochondrion inner membrane. This is an uncharacterized protein from Schizosaccharomyces pombe (strain 972 / ATCC 24843) (Fission yeast).